The chain runs to 459 residues: Bifunctional protein GlmU (459 aa).

Residues 1 to 230 are pyrophosphorylase; that stretch reads MSNRFAVILA…FDETLGVNDR (230 aa). UDP-N-acetyl-alpha-D-glucosamine-binding positions include 9–12, Lys23, Gln73, and 78–79; these read LAAG and GT. Asp103 lines the Mg(2+) pocket. UDP-N-acetyl-alpha-D-glucosamine is bound by residues Gly140, Glu155, Asn170, and Asn228. Asn228 provides a ligand contact to Mg(2+). Residues 231-251 form a linker region; that stretch reads VALSQAEIIMKNRINRKNMVN. Residues 252–459 are N-acetyltransferase; the sequence is GVTIIDPSNT…VDQLLNKKKS (208 aa). Arg333 and Lys351 together coordinate UDP-N-acetyl-alpha-D-glucosamine. The Proton acceptor role is filled by His363. Tyr366 and Asn377 together coordinate UDP-N-acetyl-alpha-D-glucosamine. Residues 386–387, Ala423, and Arg440 each bind acetyl-CoA; that span reads NY.

It in the N-terminal section; belongs to the N-acetylglucosamine-1-phosphate uridyltransferase family. This sequence in the C-terminal section; belongs to the transferase hexapeptide repeat family. As to quaternary structure, homotrimer. Requires Mg(2+) as cofactor.

The protein localises to the cytoplasm. It catalyses the reaction alpha-D-glucosamine 1-phosphate + acetyl-CoA = N-acetyl-alpha-D-glucosamine 1-phosphate + CoA + H(+). The catalysed reaction is N-acetyl-alpha-D-glucosamine 1-phosphate + UTP + H(+) = UDP-N-acetyl-alpha-D-glucosamine + diphosphate. It participates in nucleotide-sugar biosynthesis; UDP-N-acetyl-alpha-D-glucosamine biosynthesis; N-acetyl-alpha-D-glucosamine 1-phosphate from alpha-D-glucosamine 6-phosphate (route II): step 2/2. It functions in the pathway nucleotide-sugar biosynthesis; UDP-N-acetyl-alpha-D-glucosamine biosynthesis; UDP-N-acetyl-alpha-D-glucosamine from N-acetyl-alpha-D-glucosamine 1-phosphate: step 1/1. The protein operates within bacterial outer membrane biogenesis; LPS lipid A biosynthesis. In terms of biological role, catalyzes the last two sequential reactions in the de novo biosynthetic pathway for UDP-N-acetylglucosamine (UDP-GlcNAc). The C-terminal domain catalyzes the transfer of acetyl group from acetyl coenzyme A to glucosamine-1-phosphate (GlcN-1-P) to produce N-acetylglucosamine-1-phosphate (GlcNAc-1-P), which is converted into UDP-GlcNAc by the transfer of uridine 5-monophosphate (from uridine 5-triphosphate), a reaction catalyzed by the N-terminal domain. The protein is Bifunctional protein GlmU of Bacillus thuringiensis subsp. konkukian (strain 97-27).